The sequence spans 63 residues: Conotoxin Lt11.1 (63 aa).

Residues 1–23 (MMFRLTSVLLVIVLLNLVVLTNA) form the signal peptide. Disulfide bonds link Cys-24–Cys-34, Cys-28–Cys-39, Cys-33–Cys-42, and Cys-38–Cys-47. A propeptide spanning residues 53–63 (ALLQRLLGHQR) is cleaved from the precursor.

Belongs to the conotoxin I2 superfamily. Expressed by the venom duct.

It localises to the secreted. This is Conotoxin Lt11.1 from Conus litteratus (Lettered cone).